We begin with the raw amino-acid sequence, 297 residues long: MSSLPYRGRFAPSPTGPLHFGSLLAALGSWLLARHAGGEWHVRIEDIDPPRAEPGASERQLHTLAAFGLHSDGPVLYQSDRDAYYEAALSRLLRSGAAFECSCSRAELAAMGGIHHVCVAPLGIRRAVRLRVPPNTQASFQDALQGRITQDVYSEVGDVVLRRADGYWAYQLAVVVDDAAQGITDVVRGADLLDSTPRQLVLQQALGVAPPRYLHLPLILGADGRKLSKSHAAQPVDDSDPLPALRAAWRALGQAPAALPARASVAGVLQHAVQHFSPQRLPRVASLDAATRIDAPA.

Residues 9 to 13 (RFAPS) and Glu45 contribute to the L-glutamate site. The 'HIGH' region motif lies at 12-22 (PSPTGPLHFGS). Zn(2+) contacts are provided by Cys101, Cys103, and Cys118. Positions 170 and 188 each coordinate L-glutamate. A 'KMSKS' region motif is present at residues 226–230 (KLSKS). Lys229 serves as a coordination point for ATP.

It belongs to the class-I aminoacyl-tRNA synthetase family. GluQ subfamily. Zn(2+) serves as cofactor.

Its function is as follows. Catalyzes the tRNA-independent activation of glutamate in presence of ATP and the subsequent transfer of glutamate onto a tRNA(Asp). Glutamate is transferred on the 2-amino-5-(4,5-dihydroxy-2-cyclopenten-1-yl) moiety of the queuosine in the wobble position of the QUC anticodon. In Xanthomonas campestris pv. campestris (strain 8004), this protein is Glutamyl-Q tRNA(Asp) synthetase.